Consider the following 245-residue polypeptide: Venom nerve growth factor 1 (245 aa).

The signal sequence occupies residues Met1–Ala18. Residues Ala19 to Arg125 constitute a propeptide that is removed on maturation. The span at Gly47–Asp66 shows a compositional bias: basic and acidic residues. The tract at residues Gly47–Leu69 is disordered. 3 disulfides stabilise this stretch: Cys139-Cys206, Cys182-Cys234, and Cys194-Cys236. Asn148 and Asn151 each carry an N-linked (GlcNAc...) asparagine glycan.

Belongs to the NGF-beta family. As to quaternary structure, homodimer; non-covalently linked. In terms of tissue distribution, expressed by the venom gland.

The protein resides in the secreted. Functionally, nerve growth factor is important for the development and maintenance of the sympathetic and sensory nervous systems. It stimulates division and differentiation of sympathetic and embryonic sensory neurons as well as basal forebrain cholinergic neurons in the brain. Its relevance in the snake venom is not clear. However, it has been shown to inhibit metalloproteinase-dependent proteolysis of platelet glycoprotein Ib alpha, suggesting a metalloproteinase inhibition to prevent metalloprotease autodigestion and/or protection against prey proteases. Binds a lipid between the two protein chains in the homodimer. The lipid-bound form promotes histamine relase from mouse mast cells, contrary to the lipid-free form. In Tropidechis carinatus (Australian rough-scaled snake), this protein is Venom nerve growth factor 1.